The following is a 96-amino-acid chain: Protein RnfH (96 aa).

Belongs to the UPF0125 (RnfH) family.

This Escherichia coli O81 (strain ED1a) protein is Protein RnfH.